Here is an 843-residue protein sequence, read N- to C-terminus: Protein P (843 aa).

The tract at residues M1–Q177 is terminal protein domain (TP). The spacer stretch occupies residues E178–L346. Disordered stretches follow at residues K228–P259 and E283–S314. Basic residues predominate over residues R239–T249. The interval E347–Q690 is polymerase/reverse transcriptase domain (RT). The region spanning Q357 to I600 is the Reverse transcriptase domain. D429, D551, and D552 together coordinate Mg(2+).

This sequence belongs to the hepadnaviridae P protein family.

It catalyses the reaction DNA(n) + a 2'-deoxyribonucleoside 5'-triphosphate = DNA(n+1) + diphosphate. The enzyme catalyses Endonucleolytic cleavage to 5'-phosphomonoester.. Activated by host HSP70 and HSP40 in vitro to be able to bind the epsilon loop of the pgRNA. Because deletion of the RNase H region renders the protein partly chaperone-independent, the chaperones may be needed indirectly to relieve occlusion of the RNA-binding site by this domain. Inhibited by several reverse-transcriptase inhibitors: Lamivudine, Adefovir and Entecavir. Multifunctional enzyme that converts the viral RNA genome into dsDNA in viral cytoplasmic capsids. This enzyme displays a DNA polymerase activity that can copy either DNA or RNA templates, and a ribonuclease H (RNase H) activity that cleaves the RNA strand of RNA-DNA heteroduplexes in a partially processive 3'- to 5'-endonucleasic mode. Neo-synthesized pregenomic RNA (pgRNA) are encapsidated together with the P protein, and reverse-transcribed inside the nucleocapsid. Initiation of reverse-transcription occurs first by binding the epsilon loop on the pgRNA genome, and is initiated by protein priming, thereby the 5'-end of (-)DNA is covalently linked to P protein. Partial (+)DNA is synthesized from the (-)DNA template and generates the relaxed circular DNA (RC-DNA) genome. After budding and infection, the RC-DNA migrates in the nucleus, and is converted into a plasmid-like covalently closed circular DNA (cccDNA). The activity of P protein does not seem to be necessary for cccDNA generation, and is presumably released from (+)DNA by host nuclear DNA repair machinery. The protein is Protein P of Homo sapiens (Human).